Here is a 164-residue protein sequence, read N- to C-terminus: Small ribosomal subunit protein uS5 (164 aa).

One can recognise an S5 DRBM domain in the interval 9–72 (YQEKLLKISR…AAAKKNIVKI (64 aa)).

The protein belongs to the universal ribosomal protein uS5 family. Part of the 30S ribosomal subunit. Contacts proteins S4 and S8.

Functionally, with S4 and S12 plays an important role in translational accuracy. In terms of biological role, located at the back of the 30S subunit body where it stabilizes the conformation of the head with respect to the body. This Fusobacterium nucleatum subsp. nucleatum (strain ATCC 25586 / DSM 15643 / BCRC 10681 / CIP 101130 / JCM 8532 / KCTC 2640 / LMG 13131 / VPI 4355) protein is Small ribosomal subunit protein uS5.